Here is a 165-residue protein sequence, read N- to C-terminus: Thiol peroxidase (165 aa).

Residues 18–165 (PAVGSPAPAF…YEAALAALGA (148 aa)) form the Thioredoxin domain. Cysteine 60 serves as the catalytic Cysteine sulfenic acid (-SOH) intermediate. Cysteine 60 and cysteine 93 are oxidised to a cystine.

Belongs to the peroxiredoxin family. Tpx subfamily. In terms of assembly, homodimer.

The catalysed reaction is a hydroperoxide + [thioredoxin]-dithiol = an alcohol + [thioredoxin]-disulfide + H2O. Its function is as follows. Thiol-specific peroxidase that catalyzes the reduction of hydrogen peroxide and organic hydroperoxides to water and alcohols, respectively. Plays a role in cell protection against oxidative stress by detoxifying peroxides. The polypeptide is Thiol peroxidase (Mycobacterium bovis (strain ATCC BAA-935 / AF2122/97)).